The primary structure comprises 119 residues: ATP-dependent Clp protease adapter protein ClpS (119 aa).

Positions 1-29 are disordered; the sequence is MICPPGENKSMAERKQGGQGNGVGSSVVT.

The protein belongs to the ClpS family. Binds to the N-terminal domain of the chaperone ClpA.

Functionally, involved in the modulation of the specificity of the ClpAP-mediated ATP-dependent protein degradation. The polypeptide is ATP-dependent Clp protease adapter protein ClpS (Caulobacter vibrioides (strain ATCC 19089 / CIP 103742 / CB 15) (Caulobacter crescentus)).